Consider the following 1247-residue polypeptide: Lon protease homolog 2, peroxisomal (1247 aa).

Residues 22-402 (LPTYTLDSNL…LINEMILQLI (381 aa)) enclose the Lon N-terminal domain. Disordered regions lie at residues 76–103 (SGNS…ETYH), 447–503 (TKNR…DVDD), and 626–655 (DQSD…SPTS). Residues 459–477 (PGPASSSGPSFSNGKSSPG) are compositionally biased toward low complexity. Over residues 626-639 (DQSDKSQPIKDNSK) the composition is skewed to basic and acidic residues. 721–728 (GPPGTGKT) contributes to the ATP binding site. Positions 989 to 1230 (TVGVGVVHGL…YDIIKIVWNE (242 aa)) constitute a Lon proteolytic domain. Catalysis depends on residues Ser1099 and Lys1142.

This sequence belongs to the peptidase S16 family.

It is found in the peroxisome matrix. The catalysed reaction is Hydrolysis of proteins in presence of ATP.. Functionally, ATP-dependent serine protease that mediates the selective degradation of misfolded and unassembled polypeptides in the peroxisomal matrix. Necessary for type 2 peroxisome targeting signal (PTS2)-containing protein processing and facilitates peroxisome matrix protein import. This is Lon protease homolog 2, peroxisomal from Candida dubliniensis (strain CD36 / ATCC MYA-646 / CBS 7987 / NCPF 3949 / NRRL Y-17841) (Yeast).